A 281-amino-acid chain; its full sequence is Pantothenate synthetase (281 aa).

Position 30 to 37 (30 to 37 (MGNLHQGH)) interacts with ATP. His-37 serves as the catalytic Proton donor. Residue Gln-61 participates in (R)-pantoate binding. A beta-alanine-binding site is contributed by Gln-61. 149 to 152 (GRKD) contacts ATP. Gln-155 is a (R)-pantoate binding site. Residues Ile-178 and 186-189 (MSSR) each bind ATP.

Belongs to the pantothenate synthetase family. As to quaternary structure, homodimer.

It localises to the cytoplasm. It carries out the reaction (R)-pantoate + beta-alanine + ATP = (R)-pantothenate + AMP + diphosphate + H(+). It participates in cofactor biosynthesis; (R)-pantothenate biosynthesis; (R)-pantothenate from (R)-pantoate and beta-alanine: step 1/1. Its function is as follows. Catalyzes the condensation of pantoate with beta-alanine in an ATP-dependent reaction via a pantoyl-adenylate intermediate. This Shewanella denitrificans (strain OS217 / ATCC BAA-1090 / DSM 15013) protein is Pantothenate synthetase.